We begin with the raw amino-acid sequence, 293 residues long: Phospholipid scramblase 2 (293 aa).

The disordered stretch occupies residues 1–39 (MDKQNVQMNPPHPGTNLTGPPGHIGYPGPQAGYAVPPPG). The tract at residues 1 to 66 (MDKQNVQMNP…GHPGAPTQVP (66 aa)) is proline-rich domain (PRD). Residues 1 to 270 (MDKQNVQMNP…IQFPLDLDVK (270 aa)) are Cytoplasmic-facing. Phosphothreonine; by PKC is present on Thr-143. S-palmitoyl cysteine attachment occurs at residues Cys-166, Cys-167, Cys-170, and Cys-171. The helical transmembrane segment at 271–287 (MKAVMLGACFLIDFMFF) threads the bilayer. Residues 288 to 293 (EMTRGE) lie on the Extracellular side of the membrane.

This sequence belongs to the phospholipid scramblase family. The cofactor is Ca(2+).

Its subcellular location is the membrane. The enzyme catalyses a 1,2-diacyl-sn-glycero-3-phosphocholine(in) = a 1,2-diacyl-sn-glycero-3-phosphocholine(out). In terms of biological role, may catalyze calcium-induced ATP-independent rapid bidirectional and non-specific movement of phospholipids (lipid scrambling or lipid flip-flop) between the inner and outer leaflet of the plasma membrane. This is Phospholipid scramblase 2 from Bos taurus (Bovine).